The following is a 393-amino-acid chain: Methylthioribose kinase (393 aa).

ATP is bound by residues asparagine 38, lysine 53, and 107–109 (EDL). Residue aspartate 225 participates in substrate binding. 242–244 (DPE) is a binding site for ATP. Residue arginine 332 participates in substrate binding.

It belongs to the methylthioribose kinase family. In terms of assembly, homodimer.

The catalysed reaction is 5-(methylsulfanyl)-D-ribose + ATP = 5-(methylsulfanyl)-alpha-D-ribose 1-phosphate + ADP + H(+). The protein operates within amino-acid biosynthesis; L-methionine biosynthesis via salvage pathway; S-methyl-5-thio-alpha-D-ribose 1-phosphate from S-methyl-5'-thioadenosine (hydrolase route): step 2/2. Catalyzes the phosphorylation of methylthioribose into methylthioribose-1-phosphate. The polypeptide is Methylthioribose kinase (Bacillus cereus (strain AH820)).